We begin with the raw amino-acid sequence, 367 residues long: Zinc finger CCCH domain-containing protein 56 (367 aa).

The disordered stretch occupies residues 38 to 80 (YNSQWNADGGGGGSSRAGSEQPPPGKKSRGGGGGEGGGNTSKS). A compositionally biased stretch (gly residues) spans 67 to 76 (GGGGGEGGGN). 3 C3H1-type zinc fingers span residues 87–114 (FFKTKLCCKFRAGTCPYVTNCNFAHGME), 169–197 (AYKGRHCKKFYTDEGCPYGDACTFLHDEQ), and 245–273 (NWKTRICNKWEMTGYCPFGSKCHFAHGAA).

The sequence is that of Zinc finger CCCH domain-containing protein 56 from Oryza sativa subsp. japonica (Rice).